A 233-amino-acid polypeptide reads, in one-letter code: Enolase-phosphatase E1 (233 aa).

Mg(2+) is bound by residues Asp6 and Glu8. Residues 128–129 (SS) and Lys163 contribute to the substrate site. Asp188 contributes to the Mg(2+) binding site.

It belongs to the HAD-like hydrolase superfamily. MasA/MtnC family. Monomer. Mg(2+) is required as a cofactor.

The protein localises to the cytoplasm. It is found in the nucleus. It carries out the reaction 5-methylsulfanyl-2,3-dioxopentyl phosphate + H2O = 1,2-dihydroxy-5-(methylsulfanyl)pent-1-en-3-one + phosphate. The protein operates within amino-acid biosynthesis; L-methionine biosynthesis via salvage pathway; L-methionine from S-methyl-5-thio-alpha-D-ribose 1-phosphate: step 3/6. It participates in amino-acid biosynthesis; L-methionine biosynthesis via salvage pathway; L-methionine from S-methyl-5-thio-alpha-D-ribose 1-phosphate: step 4/6. In terms of biological role, bifunctional enzyme that catalyzes the enolization of 2,3-diketo-5-methylthiopentyl-1-phosphate (DK-MTP-1-P) into the intermediate 2-hydroxy-3-keto-5-methylthiopentenyl-1-phosphate (HK-MTPenyl-1-P), which is then dephosphorylated to form the acireductone 1,2-dihydroxy-3-keto-5-methylthiopentene (DHK-MTPene). The chain is Enolase-phosphatase E1 from Yarrowia lipolytica (strain CLIB 122 / E 150) (Yeast).